We begin with the raw amino-acid sequence, 1272 residues long: Myosin-binding protein C, cardiac-type (1272 aa).

The segment at 95–147 (KEPEKSEPVAPAEASPAPAASELPAPPVESNQNPEVPPAETQPEEPVDPIGLF) is disordered. Residues 102–117 (PVAPAEASPAPAASEL) are compositionally biased toward low complexity. Positions 137–252 (PEEPVDPIGL…NLIVNEAPVS (116 aa)) constitute an Ig-like C2-type 1 domain. Residue Ser265 is modified to Phosphoserine; by PKA and PKC. At Thr274 the chain carries Phosphothreonine; by PKA and PKC. Position 300 is a phosphoserine; by PKA (Ser300). 4 consecutive Ig-like C2-type domains span residues 359–451 (KKST…VKEP), 452–542 (PILI…VQEK), 543–640 (KLEV…FVPR), and 644–763 (PKIH…ADIT). Fibronectin type-III domains are found at residues 772–868 (PPEA…IAPP) and 870–965 (EPTH…VQEI). The Ig-like C2-type 6 domain occupies 969–1057 (PKICVPRHLR…ENMTDTVAIT (89 aa)). The 96-residue stretch at 1066–1161 (PPQNIKLADV…TKNPAYIQKT (96 aa)) folds into the Fibronectin type-III 3 domain. Ser1169 is modified (phosphoserine; by PKC). The 85-residue stretch at 1179 to 1263 (PKFTHPLVNR…VNERGEAEIE (85 aa)) folds into the Ig-like C2-type 7 domain.

It belongs to the immunoglobulin superfamily. MyBP family. Substrate for phosphorylation by PKA and PKC. Reversible phosphorylation appears to modulate contraction. In terms of tissue distribution, expressed specifically in cardiac muscle among adult tissues, but is also expressed transiently in the skeletal muscle at early developmental stages. Isoform Type I is found in embryonic skeletal muscle and isoform Type II is found in both embryonic skeletal and cardiac muscle.

Functionally, thick filament-associated protein located in the crossbridge region of vertebrate striated muscle A bands. In vitro it binds MHC, F-actin and native thin filaments, and modifies the activity of actin-activated myosin ATPase. It may modulate muscle contraction or may play a more structural role. May be involved in the early phase of myofibrillogenesis. The protein is Myosin-binding protein C, cardiac-type (MYBPC3) of Gallus gallus (Chicken).